A 305-amino-acid polypeptide reads, in one-letter code: GS homeobox 2 (305 aa).

Disordered stretches follow at residues 115-151 (DAQF…AAAA) and 259-305 (KKEG…ISPL). Residues 123-140 (SHAHHHHHPPQHHHHHHQ) show a composition bias toward basic residues. Residues 141–151 (PQQPGSAAAAA) are compositionally biased toward low complexity. A DNA-binding region (homeobox) is located at residues 203-262 (GKRMRTAFTSTQLLELEREFSSNMYLSRLRRIEIATYLNLSEKQVKIWFQNRRVKHKKEG).

This sequence belongs to the Antp homeobox family.

It is found in the nucleus. Its function is as follows. Transcription factor that binds 5'-CNAATTAG-3' DNA sequence and regulates the expression of numerous genes including genes important for brain development. During telencephalic development, causes ventralization of pallial progenitors and, depending on the developmental stage, specifies different neuronal fates. At early stages, necessary and sufficient to correctly specify the ventral lateral ganglionic eminence (LGE) and its major derivatives, the striatal projection neurons. At later stages, may specify LGE progenitors toward dorsal LGE fates, including olfactory bulb interneurons. This is GS homeobox 2 (Gsx2) from Mus musculus (Mouse).